Here is a 267-residue protein sequence, read N- to C-terminus: Protein BMH1 (267 aa).

Position 2 is an N-acetylserine (Ser-2). Lys-76 is covalently cross-linked (Glycyl lysine isopeptide (Lys-Gly) (interchain with G-Cter in ubiquitin)). Ser-89 is subject to Phosphoserine. A disordered region spans residues 236 to 267 (DMSESGQAEDQQQQQQHQQQQPPAAAEGEAPK). The segment covering 243 to 267 (AEDQQQQQQHQQQQPPAAAEGEAPK) has biased composition (low complexity).

The protein belongs to the 14-3-3 family. As to quaternary structure, homodimer. Interacts with NTH1 (via N-terminus when phosphorylated by PKA); the interaction is direct and activates NTH1. Interacts with FIN1.

Functionally, involved in growth regulation. This chain is Protein BMH1 (BMH1), found in Saccharomyces cerevisiae (strain ATCC 204508 / S288c) (Baker's yeast).